Consider the following 364-residue polypeptide: Valine dehydrogenase (364 aa).

Lys91 is an active-site residue. Residue 191–197 (GVGKVGH) coordinates NAD(+).

This sequence belongs to the Glu/Leu/Phe/Val dehydrogenases family. In terms of assembly, homodimer.

The protein localises to the cytoplasm. The catalysed reaction is L-valine + NAD(+) + H2O = 3-methyl-2-oxobutanoate + NH4(+) + NADH + H(+). The protein operates within amino-acid degradation; L-valine degradation. Inhibited by pyridoxal 5'-phosphate (PLP). In terms of biological role, oxidative deamination of branched-chain amino acids. Oxidizes L-valine and L-alpha-aminobutyric acid efficiently, and L-alanine and L-isoleucine less efficiently. D-valine and L-glutamate were not substrates for the enzyme. The catabolism of valine is the major source of fatty acid precursors for macrolide biosynthesis and a vital source of antibiotic precursors. The polypeptide is Valine dehydrogenase (Streptomyces albus (strain ATCC 21838 / DSM 41398 / FERM P-419 / JCM 4703 / NBRC 107858)).